Here is a 278-residue protein sequence, read N- to C-terminus: HTH-type transcriptional activator RhaS (278 aa).

The HTH araC/xylS-type domain maps to 174 to 272 (NQLLAWLEDH…DWSPRDIRQG (99 aa)). 2 DNA-binding regions (H-T-H motif) span residues 191–212 (ESIADKFSLSLRTLHRQLKQQT) and 239–262 (VTDIAYRCGFGDSNHFSTLFRREF).

Binds DNA as a dimer.

It is found in the cytoplasm. Activates expression of the rhaBAD and rhaT operons. This chain is HTH-type transcriptional activator RhaS, found in Citrobacter koseri (strain ATCC BAA-895 / CDC 4225-83 / SGSC4696).